We begin with the raw amino-acid sequence, 365 residues long: MSWNTFGRVLRMTTWGESHGPAIGCVLDGCPPGIALSESDIQPFLDARRPGQNKFTTQRKEPDQVRILSGVFDGQDGVQRTTGTPISLMIENVDQRSKDYSEVAKAYRPGHADYAYDAKYGFRDYRGGGRSSARETAMRVAAGAVARLIIPDVTITGYVREIGGDAIDAARFDSDAIGENPFWCPDADAAKRWETLVDEARKAGSSLGAVVECVAEGVPAGWGAPIYAKLDGDLGGAMMSINAVKGVEIGDGFDAARLSGEQNADPMRPAAEGSDAGPRFEANHAGGISGGISTGQPVTCKVAFKPTSSILTPVETIDTEGNATEIRTKGRHDPCVGIRGTPVVEAMMALVLADHMLLHRAQCGQ.

Arg-48 contacts NADP(+). FMN contacts are provided by residues 130–132 (RSS), 242–243 (NA), Gly-290, 305–309 (KPTSS), and Arg-331.

This sequence belongs to the chorismate synthase family. As to quaternary structure, homotetramer. The cofactor is FMNH2.

The enzyme catalyses 5-O-(1-carboxyvinyl)-3-phosphoshikimate = chorismate + phosphate. It participates in metabolic intermediate biosynthesis; chorismate biosynthesis; chorismate from D-erythrose 4-phosphate and phosphoenolpyruvate: step 7/7. In terms of biological role, catalyzes the anti-1,4-elimination of the C-3 phosphate and the C-6 proR hydrogen from 5-enolpyruvylshikimate-3-phosphate (EPSP) to yield chorismate, which is the branch point compound that serves as the starting substrate for the three terminal pathways of aromatic amino acid biosynthesis. This reaction introduces a second double bond into the aromatic ring system. The polypeptide is Chorismate synthase (Erythrobacter litoralis (strain HTCC2594)).